The following is an 82-amino-acid chain: Small ribosomal subunit protein bS16 (82 aa).

The protein belongs to the bacterial ribosomal protein bS16 family.

The protein is Small ribosomal subunit protein bS16 of Cyanothece sp. (strain PCC 7425 / ATCC 29141).